A 463-amino-acid chain; its full sequence is L-seryl-tRNA(Sec) selenium transferase (463 aa).

An N6-(pyridoxal phosphate)lysine modification is found at Lys-295.

The protein belongs to the SelA family. As to quaternary structure, homodecamer; pentamer of dimers. Binds only one seryl-tRNA(Sec) per dimer. It depends on pyridoxal 5'-phosphate as a cofactor.

It localises to the cytoplasm. It catalyses the reaction L-seryl-tRNA(Sec) + selenophosphate + H(+) = L-selenocysteinyl-tRNA(Sec) + phosphate. It participates in aminoacyl-tRNA biosynthesis; selenocysteinyl-tRNA(Sec) biosynthesis; selenocysteinyl-tRNA(Sec) from L-seryl-tRNA(Sec) (bacterial route): step 1/1. In terms of biological role, converts seryl-tRNA(Sec) to selenocysteinyl-tRNA(Sec) required for selenoprotein biosynthesis. This is L-seryl-tRNA(Sec) selenium transferase from Escherichia coli (strain K12 / MC4100 / BW2952).